Here is a 152-residue protein sequence, read N- to C-terminus: Superoxide dismutase [Cu-Zn] (152 aa).

Cu cation contacts are provided by H45, H47, and H62. A disulfide bridge links C56 with C145. The Zn(2+) site is built by H62, H70, H79, and D82. A Cu cation-binding site is contributed by H119.

Belongs to the Cu-Zn superoxide dismutase family. Homodimer. Cu cation serves as cofactor. The cofactor is Zn(2+).

It is found in the cytoplasm. The enzyme catalyses 2 superoxide + 2 H(+) = H2O2 + O2. Destroys radicals which are normally produced within the cells and which are toxic to biological systems. This Ipomoea batatas (Sweet potato) protein is Superoxide dismutase [Cu-Zn] (SODCC).